We begin with the raw amino-acid sequence, 276 residues long: 4-diphosphocytidyl-2-C-methyl-D-erythritol kinase (276 aa).

Residue Lys-13 is part of the active site. Residue 94–104 (PHAGGIGGGSA) participates in ATP binding. Asp-131 is a catalytic residue.

It belongs to the GHMP kinase family. IspE subfamily.

The enzyme catalyses 4-CDP-2-C-methyl-D-erythritol + ATP = 4-CDP-2-C-methyl-D-erythritol 2-phosphate + ADP + H(+). The protein operates within isoprenoid biosynthesis; isopentenyl diphosphate biosynthesis via DXP pathway; isopentenyl diphosphate from 1-deoxy-D-xylulose 5-phosphate: step 3/6. Functionally, catalyzes the phosphorylation of the position 2 hydroxy group of 4-diphosphocytidyl-2C-methyl-D-erythritol. The polypeptide is 4-diphosphocytidyl-2-C-methyl-D-erythritol kinase (Jannaschia sp. (strain CCS1)).